A 297-amino-acid chain; its full sequence is NAC domain-containing protein 72 (297 aa).

The 149-residue stretch at 14-162 (LPPGFRFYPT…DWVLCRIYKK (149 aa)) folds into the NAC domain. The DNA-binding element occupies 111–168 (VGIKKALVFYAGKAPKGTKTNWIMHEYRLIEHSRSHGSSKLDDWVLCRIYKKTSGSQR). Disordered stretches follow at residues 168-195 (RQAV…SQLD) and 259-278 (GEAE…LTQS). Residues 266–277 (VNRQQNSSGLTQ) show a composition bias toward polar residues.

As to expression, expressed in leaves and in root pericycle and epidermis.

The protein localises to the nucleus. Transcription factors that bind specifically to the 5'-CATGTG-3' motif and with bipartite regions with 5'-CGTr-3' and 5'-YACG-3' as cores. Involved in the regulation of metabolic reprogramming during senescence by promoting the chloroplast protein degradation and the catabolism of lysine, phytol and free fatty acids via the induction of CV, LKR/SDH and PES1 expression. Also triggers the degradation of starch and the accumulation of mono- and disaccharides during senescence by enhancing the expression of AMY1, SFP1 and SWEET15. This Arabidopsis thaliana (Mouse-ear cress) protein is NAC domain-containing protein 72.